A 423-amino-acid polypeptide reads, in one-letter code: NDP-N-acetyl-D-galactosaminuronic acid dehydrogenase (423 aa).

An NAD(+)-binding site is contributed by 11–28 (TISVVGLGYIGLPTATVL). Lysine 218 acts as the Proton donor/acceptor in catalysis. Cysteine 272 acts as the Nucleophile in catalysis.

This sequence belongs to the UDP-glucose/GDP-mannose dehydrogenase family.

Probably involved in synthesis of sugar components of EPS I, by converting NDP-N-acetyl-D-galactosamine into NDP-N-acetyl-D-galactosaminuronic acid. This is NDP-N-acetyl-D-galactosaminuronic acid dehydrogenase (epsD) from Ralstonia solanacearum (Pseudomonas solanacearum).